The primary structure comprises 263 residues: Purine nucleoside phosphorylase SAR1163 (263 aa).

The Zn(2+) site is built by His-79, Cys-124, and His-141.

Belongs to the purine nucleoside phosphorylase YfiH/LACC1 family. Homodimer. It depends on Cu(2+) as a cofactor. Requires Zn(2+) as cofactor.

The catalysed reaction is adenosine + phosphate = alpha-D-ribose 1-phosphate + adenine. It carries out the reaction S-methyl-5'-thioadenosine + phosphate = 5-(methylsulfanyl)-alpha-D-ribose 1-phosphate + adenine. It catalyses the reaction inosine + phosphate = alpha-D-ribose 1-phosphate + hypoxanthine. The enzyme catalyses adenosine + H2O + H(+) = inosine + NH4(+). Functionally, purine nucleoside enzyme that catalyzes the phosphorolysis of adenosine and inosine nucleosides, yielding D-ribose 1-phosphate and the respective free bases, adenine and hypoxanthine. Also catalyzes the phosphorolysis of S-methyl-5'-thioadenosine into adenine and S-methyl-5-thio-alpha-D-ribose 1-phosphate. Also has adenosine deaminase activity. In Staphylococcus aureus (strain MRSA252), this protein is Purine nucleoside phosphorylase SAR1163.